The sequence spans 276 residues: 3-keto-5-aminohexanoate cleavage enzyme (276 aa).

Glutamate 14 is a binding site for (5S)-5-amino-3-oxohexanoate. Zn(2+) is bound by residues histidine 46 and histidine 48. Residues serine 82, glycine 85, threonine 106, and asparagine 108 each coordinate (5S)-5-amino-3-oxohexanoate. Glutamate 230 is a binding site for Zn(2+).

This sequence belongs to the BKACE family. Kce subfamily. In terms of assembly, homotetramer. Zn(2+) is required as a cofactor.

The enzyme catalyses (5S)-5-amino-3-oxohexanoate + acetyl-CoA = (3S)-3-aminobutanoyl-CoA + acetoacetate. It participates in amino-acid degradation; L-lysine degradation via acetate pathway. Functionally, involved in the anaerobic fermentation of lysine. Catalyzes the reversible reaction between 3-keto-5-aminohexanoate (KAH) and acetyl-CoA to form 3-aminobutyryl-CoA and acetoacetate. The reaction involves the deprotonation of KAH, the nucleophilic addition onto acetyl-CoA and the intramolecular transfer of the CoA moiety. This is 3-keto-5-aminohexanoate cleavage enzyme from Cloacimonas acidaminovorans (strain Evry).